The following is a 289-amino-acid chain: Glycine--tRNA ligase alpha subunit (289 aa).

This sequence belongs to the class-II aminoacyl-tRNA synthetase family. In terms of assembly, tetramer of two alpha and two beta subunits.

The protein resides in the cytoplasm. It carries out the reaction tRNA(Gly) + glycine + ATP = glycyl-tRNA(Gly) + AMP + diphosphate. This chain is Glycine--tRNA ligase alpha subunit (glyQ), found in Rickettsia prowazekii (strain Madrid E).